A 143-amino-acid chain; its full sequence is Small ribosomal subunit protein bS6 (143 aa).

The segment at Gln-100–Ala-143 is disordered. Basic and acidic residues predominate over residues Lys-105–Asp-121. Positions Asp-126 to Ala-143 are enriched in low complexity.

The protein belongs to the bacterial ribosomal protein bS6 family.

Functionally, binds together with bS18 to 16S ribosomal RNA. The protein is Small ribosomal subunit protein bS6 of Xylella fastidiosa (strain M12).